We begin with the raw amino-acid sequence, 159 residues long: Cyclic pyranopterin monophosphate synthase (159 aa).

Residues 74–76 (MCH) and 112–113 (ME) each bind substrate. The active site involves aspartate 127.

The protein belongs to the MoaC family. In terms of assembly, homohexamer; trimer of dimers.

It catalyses the reaction (8S)-3',8-cyclo-7,8-dihydroguanosine 5'-triphosphate = cyclic pyranopterin phosphate + diphosphate. It participates in cofactor biosynthesis; molybdopterin biosynthesis. Its function is as follows. Catalyzes the conversion of (8S)-3',8-cyclo-7,8-dihydroguanosine 5'-triphosphate to cyclic pyranopterin monophosphate (cPMP). The protein is Cyclic pyranopterin monophosphate synthase of Helicobacter hepaticus (strain ATCC 51449 / 3B1).